Reading from the N-terminus, the 395-residue chain is WW domain-containing transcription regulator protein 1 (395 aa).

A Glycyl lysine isopeptide (Lys-Gly) (interchain with G-Cter in ubiquitin) cross-link involves residue K46. Positions 52–116 are disordered; that stretch reads FFKEPDSGSH…AQQHAHLRQQ (65 aa). A compositionally biased stretch (polar residues) spans 61–70; it reads HSRQSSTDSS. S62 carries the phosphoserine modification. S89 is modified (phosphoserine; by LATS2). The WW domain maps to 124–157; the sequence is LPLPPGWEMTFTATGQRYFLNHIEKITTWQDPRK. The segment at 221 to 395 is required for interaction with PALS1; that stretch reads PNALTTQQQQ…NKSEPFLTWL (175 aa). Residues 224–258 are a coiled coil; it reads LTTQQQQQQKLRLQRIQMERERIRMRQEELMRQEA. The span at 277–293 shows a compositional bias: polar residues; it reads PAMSTDMRSVTNSSSDP. Residues 277–308 form a disordered region; it reads PAMSTDMRSVTNSSSDPFLNGGPYHSREQSTD. S290 is modified (phosphoserine). A Phosphoserine; by LATS2 modification is found at S306. The PDZ-binding motif lies at 389 to 395; that stretch reads EPFLTWL.

As to quaternary structure, binds to SLC9A3R2 via the PDZ motif at the plasma membrane. Binds to YWHAZ in vivo and in vitro through the phosphoserine-binding motif RSHSSP. Interacts (via coiled-coil domain) with SMAD2 (via MH1 domain), SMAD3 and SMAD4. Interacts with MED15. Interacts with PAX8 and NKX2-1. Interacts with TEAD1, TEAD2, TEAD3 and TEAD4. Interacts (via WW domain) with PALS1. Interacts with LATS1. Interacts with YAP1 (when phosphorylated at 'Ser-112'). Interacts (via WW domain) with PRRG4 (via cytoplasmic domain). Interacts (via WW domain) with AMOTL2 (via PPXY motif); the interaction promotes WWTR1/TAZ localization to the cytoplasm and tight junctions, thereby inhibiting its transcriptional coactivator properties. Interacts (via WW domain) with AMOT; the interaction facilitates translocation of WWTR1/TAZ to the cytoplasm. In terms of processing, phosphorylated by LATS2 and STK3/MST2. Phosphorylation by LATS2 results in creation of 14-3-3 binding sites, retention in the cytoplasm, and functional inactivation. Phosphorylation results in the inhibition of transcriptional coactivation through YWHAZ-mediated nuclear export. Post-translationally, ubiquitinated at Lys-46; leading to proteasomal degradation. Deubiquitinated and stabilized by UCHL1 at Lys-46; leading to inhibition of osteoclastogenesis. In terms of tissue distribution, highly expressed in kidney, heart, placenta and lung.

Its subcellular location is the nucleus. It localises to the cytoplasm. It is found in the cell membrane. The protein resides in the cell junction. The protein localises to the tight junction. In terms of biological role, transcriptional coactivator which acts as a downstream regulatory target in the Hippo signaling pathway that plays a pivotal role in organ size control and tumor suppression by restricting proliferation and promoting apoptosis. The core of this pathway is composed of a kinase cascade wherein STK3/MST2 and STK4/MST1, in complex with its regulatory protein SAV1, phosphorylates and activates LATS1/2 in complex with its regulatory protein MOB1, which in turn phosphorylates and inactivates YAP1 oncoprotein and WWTR1/TAZ. WWTR1 enhances PAX8 and NKX2-1/TTF1-dependent gene activation. In conjunction with YAP1, involved in the regulation of TGFB1-dependent SMAD2 and SMAD3 nuclear accumulation. Plays a key role in coupling SMADs to the transcriptional machinery such as the mediator complex. Regulates embryonic stem-cell self-renewal, promotes cell proliferation and epithelial-mesenchymal transition. This is WW domain-containing transcription regulator protein 1 from Mus musculus (Mouse).